The following is a 289-amino-acid chain: MGASLNEIKTKIASTKKTSQITGAMQMVSAAKLQKAESHAKAFQTYAEKVRKITTDLVSSDNEPAKNPMMIKREVKKTGYLVITSDRGLVGGYNSNILKSVISNIRKRHTNESEYTILALGGTGADFFKARNVKVSYVLRGLSDQPTFEEVRAIVTEAVEEYQAEEFDELYVCYNHHVNSLVSEARMEKMLPISFDEKGDEKASLVTFELEPDRETILNQLLPQYAESMIYGSIVDAKTAEHAAGMTAMRTATDNAHSVINDLTIQYNRARQASITQEITEIVAGASAL.

It belongs to the ATPase gamma chain family. As to quaternary structure, F-type ATPases have 2 components, CF(1) - the catalytic core - and CF(0) - the membrane proton channel. CF(1) has five subunits: alpha(3), beta(3), gamma(1), delta(1), epsilon(1). CF(0) has three main subunits: a, b and c.

It localises to the cell membrane. In terms of biological role, produces ATP from ADP in the presence of a proton gradient across the membrane. The gamma chain is believed to be important in regulating ATPase activity and the flow of protons through the CF(0) complex. This chain is ATP synthase gamma chain, found in Lactococcus lactis subsp. cremoris (strain SK11).